A 164-amino-acid polypeptide reads, in one-letter code: Transcriptional repressor NrdR (164 aa).

Residues 3–34 fold into a zinc finger; sequence CPKCNYHKSSVVDSRQAEDGNTIRRRRECEQC. The ATP-cone domain occupies 49-139; the sequence is LLVIKKDGTR…VYKSFKDVDE (91 aa).

The protein belongs to the NrdR family. Zn(2+) is required as a cofactor.

Functionally, negatively regulates transcription of bacterial ribonucleotide reductase nrd genes and operons by binding to NrdR-boxes. The sequence is that of Transcriptional repressor NrdR from Streptococcus pyogenes serotype M6 (strain ATCC BAA-946 / MGAS10394).